The following is a 111-amino-acid chain: Holo-[acyl-carrier-protein] synthase (111 aa).

Residues Asp-8 and Glu-57 each coordinate Mg(2+).

It belongs to the P-Pant transferase superfamily. AcpS family. Mg(2+) serves as cofactor.

Its subcellular location is the cytoplasm. The enzyme catalyses apo-[ACP] + CoA = holo-[ACP] + adenosine 3',5'-bisphosphate + H(+). Its function is as follows. Transfers the 4'-phosphopantetheine moiety from coenzyme A to a Ser of acyl-carrier-protein. The sequence is that of Holo-[acyl-carrier-protein] synthase from Mycoplasmoides gallisepticum (strain R(low / passage 15 / clone 2)) (Mycoplasma gallisepticum).